A 99-amino-acid chain; its full sequence is Aspartyl/glutamyl-tRNA(Asn/Gln) amidotransferase subunit C (99 aa).

This sequence belongs to the GatC family. As to quaternary structure, heterotrimer of A, B and C subunits.

The catalysed reaction is L-glutamyl-tRNA(Gln) + L-glutamine + ATP + H2O = L-glutaminyl-tRNA(Gln) + L-glutamate + ADP + phosphate + H(+). It catalyses the reaction L-aspartyl-tRNA(Asn) + L-glutamine + ATP + H2O = L-asparaginyl-tRNA(Asn) + L-glutamate + ADP + phosphate + 2 H(+). Its function is as follows. Allows the formation of correctly charged Asn-tRNA(Asn) or Gln-tRNA(Gln) through the transamidation of misacylated Asp-tRNA(Asn) or Glu-tRNA(Gln) in organisms which lack either or both of asparaginyl-tRNA or glutaminyl-tRNA synthetases. The reaction takes place in the presence of glutamine and ATP through an activated phospho-Asp-tRNA(Asn) or phospho-Glu-tRNA(Gln). The polypeptide is Aspartyl/glutamyl-tRNA(Asn/Gln) amidotransferase subunit C (Paraburkholderia xenovorans (strain LB400)).